Here is a 148-residue protein sequence, read N- to C-terminus: SsrA-binding protein (148 aa).

Belongs to the SmpB family.

It is found in the cytoplasm. Its function is as follows. Required for rescue of stalled ribosomes mediated by trans-translation. Binds to transfer-messenger RNA (tmRNA), required for stable association of tmRNA with ribosomes. tmRNA and SmpB together mimic tRNA shape, replacing the anticodon stem-loop with SmpB. tmRNA is encoded by the ssrA gene; the 2 termini fold to resemble tRNA(Ala) and it encodes a 'tag peptide', a short internal open reading frame. During trans-translation Ala-aminoacylated tmRNA acts like a tRNA, entering the A-site of stalled ribosomes, displacing the stalled mRNA. The ribosome then switches to translate the ORF on the tmRNA; the nascent peptide is terminated with the 'tag peptide' encoded by the tmRNA and targeted for degradation. The ribosome is freed to recommence translation, which seems to be the essential function of trans-translation. In Ehrlichia canis (strain Jake), this protein is SsrA-binding protein.